Consider the following 266-residue polypeptide: Thiazole synthase (266 aa).

Lysine 107 acts as the Schiff-base intermediate with DXP in catalysis. 1-deoxy-D-xylulose 5-phosphate-binding positions include glycine 168, 194–195 (AG), and 216–217 (NT).

This sequence belongs to the ThiG family. In terms of assembly, homotetramer. Forms heterodimers with either ThiH or ThiS.

It is found in the cytoplasm. The catalysed reaction is [ThiS sulfur-carrier protein]-C-terminal-Gly-aminoethanethioate + 2-iminoacetate + 1-deoxy-D-xylulose 5-phosphate = [ThiS sulfur-carrier protein]-C-terminal Gly-Gly + 2-[(2R,5Z)-2-carboxy-4-methylthiazol-5(2H)-ylidene]ethyl phosphate + 2 H2O + H(+). Its pathway is cofactor biosynthesis; thiamine diphosphate biosynthesis. In terms of biological role, catalyzes the rearrangement of 1-deoxy-D-xylulose 5-phosphate (DXP) to produce the thiazole phosphate moiety of thiamine. Sulfur is provided by the thiocarboxylate moiety of the carrier protein ThiS. In vitro, sulfur can be provided by H(2)S. The sequence is that of Thiazole synthase from Azorhizobium caulinodans (strain ATCC 43989 / DSM 5975 / JCM 20966 / LMG 6465 / NBRC 14845 / NCIMB 13405 / ORS 571).